Consider the following 170-residue polypeptide: NADH-quinone oxidoreductase subunit B (170 aa).

Residues Cys-46, Cys-47, Cys-111, and Cys-141 each coordinate [4Fe-4S] cluster.

Belongs to the complex I 20 kDa subunit family. NDH-1 is composed of 14 different subunits. Subunits NuoB, C, D, E, F, and G constitute the peripheral sector of the complex. [4Fe-4S] cluster is required as a cofactor.

The protein resides in the cell membrane. The catalysed reaction is a quinone + NADH + 5 H(+)(in) = a quinol + NAD(+) + 4 H(+)(out). In terms of biological role, NDH-1 shuttles electrons from NADH, via FMN and iron-sulfur (Fe-S) centers, to quinones in the respiratory chain. The immediate electron acceptor for the enzyme in this species is believed to be a menaquinone. Couples the redox reaction to proton translocation (for every two electrons transferred, four hydrogen ions are translocated across the cytoplasmic membrane), and thus conserves the redox energy in a proton gradient. The sequence is that of NADH-quinone oxidoreductase subunit B from Geobacillus sp. (strain WCH70).